A 194-amino-acid chain; its full sequence is dTTP/UTP pyrophosphatase (194 aa).

The active-site Proton acceptor is the D73.

It belongs to the Maf family. YhdE subfamily. The cofactor is a divalent metal cation.

The protein localises to the cytoplasm. The catalysed reaction is dTTP + H2O = dTMP + diphosphate + H(+). It carries out the reaction UTP + H2O = UMP + diphosphate + H(+). Functionally, nucleoside triphosphate pyrophosphatase that hydrolyzes dTTP and UTP. May have a dual role in cell division arrest and in preventing the incorporation of modified nucleotides into cellular nucleic acids. The chain is dTTP/UTP pyrophosphatase from Clostridium botulinum (strain Kyoto / Type A2).